The sequence spans 294 residues: Protein C3orf33 homolog (294 aa).

Ala-2 is modified (N-acetylalanine). A helical membrane pass occupies residues 36–53 (LVQNISTGMAIAGIMLLI). The interval 244-271 (KPAGADLGSTKDSYHDSRRRASGKGKDS) is disordered.

The protein resides in the membrane. May play a role in transcription regulation. The polypeptide is Protein C3orf33 homolog (Mus musculus (Mouse)).